The chain runs to 121 residues: Fluoride-specific ion channel FluC 2 (121 aa).

Helical transmembrane passes span 3–23, 31–51, 64–84, and 92–112; these read YLFI…LSFI, IGTF…GTLA, GITT…FELV, and FILL…LCFL. Na(+) contacts are provided by G71 and T74.

The protein belongs to the fluoride channel Fluc/FEX (TC 1.A.43) family.

It localises to the cell membrane. It catalyses the reaction fluoride(in) = fluoride(out). Its activity is regulated as follows. Na(+) is not transported, but it plays an essential structural role and its presence is essential for fluoride channel function. In terms of biological role, fluoride-specific ion channel. Important for reducing fluoride concentration in the cell, thus reducing its toxicity. This is Fluoride-specific ion channel FluC 2 from Staphylococcus saprophyticus subsp. saprophyticus (strain ATCC 15305 / DSM 20229 / NCIMB 8711 / NCTC 7292 / S-41).